The chain runs to 235 residues: Centromere protein H (235 aa).

The disordered stretch occupies residues 1–23; sequence MAGRLSESVGSGPGAEAETAADP. The stretch at 125–145 forms a coiled coil; the sequence is EIIQAHQQARVIRENLNDIRR.

It belongs to the CENP-H/MCM16 family. Component of the CENPA-HI complex, at least composed of CENPH, CENPI, CENPK, CENPL, CENPM, CENPO and CENPP. Interacts with NDC80.

The protein localises to the nucleus. Its subcellular location is the chromosome. The protein resides in the centromere. It localises to the kinetochore. In terms of biological role, component of the CENPA-HI complex, a centromeric complex involved in assembly of kinetochore proteins, mitotic progression and chromosome segregation. Required for the localization of CENPC but not CENPA to the centromere. It however may be involved in incorporation of newly synthesized CENPA into centromeres via its interaction with the CENPA-NAC complex. The chain is Centromere protein H (CENPH) from Gallus gallus (Chicken).